A 417-amino-acid polypeptide reads, in one-letter code: D-galactonate dehydratase family member SeV_A0456 (417 aa).

Substrate-binding residues include Q43 and H127. The active-site Proton donor/acceptor is the Y158. D223 is a Mg(2+) binding site. H225 (proton donor/acceptor) is an active-site residue. Residues E249 and E275 each coordinate Mg(2+). Substrate is bound by residues E275, R296, H325, D329, and E352.

The protein belongs to the mandelate racemase/muconate lactonizing enzyme family. GalD subfamily. Mg(2+) is required as a cofactor.

The enzyme catalyses D-gluconate = 2-dehydro-3-deoxy-D-gluconate + H2O. Has low D-gluconate dehydratase activity (in vitro), suggesting that it has no significant role in D-gluconate degradation in vivo. Has no detectable activity with a panel of 70 other acid sugars (in vitro). The chain is D-galactonate dehydratase family member SeV_A0456 from Salmonella virchow (strain SL491).